A 458-amino-acid chain; its full sequence is Bifunctional protein GlmU (458 aa).

A pyrophosphorylase region spans residues 1–229 (MTNYAIILAA…FNESLGVNDR (229 aa)). Residues 8-11 (LAAG), lysine 22, glutamine 72, and 77-78 (GT) contribute to the UDP-N-acetyl-alpha-D-glucosamine site. Position 102 (aspartate 102) interacts with Mg(2+). UDP-N-acetyl-alpha-D-glucosamine contacts are provided by glycine 139, glutamate 154, asparagine 169, and asparagine 227. Asparagine 227 provides a ligand contact to Mg(2+). The segment at 230 to 250 (VALATAESVMRRRINKAHMIN) is linker. An N-acetyltransferase region spans residues 251–458 (GVTFQNPDAT…AKRLPHYPQK (208 aa)). UDP-N-acetyl-alpha-D-glucosamine is bound by residues arginine 332 and lysine 350. Histidine 362 serves as the catalytic Proton acceptor. The UDP-N-acetyl-alpha-D-glucosamine site is built by tyrosine 365 and asparagine 376. Acetyl-CoA is bound by residues alanine 379, 385–386 (NY), serine 404, alanine 422, and arginine 439.

This sequence in the N-terminal section; belongs to the N-acetylglucosamine-1-phosphate uridyltransferase family. The protein in the C-terminal section; belongs to the transferase hexapeptide repeat family. Homotrimer. The cofactor is Mg(2+).

Its subcellular location is the cytoplasm. It carries out the reaction alpha-D-glucosamine 1-phosphate + acetyl-CoA = N-acetyl-alpha-D-glucosamine 1-phosphate + CoA + H(+). The enzyme catalyses N-acetyl-alpha-D-glucosamine 1-phosphate + UTP + H(+) = UDP-N-acetyl-alpha-D-glucosamine + diphosphate. Its pathway is nucleotide-sugar biosynthesis; UDP-N-acetyl-alpha-D-glucosamine biosynthesis; N-acetyl-alpha-D-glucosamine 1-phosphate from alpha-D-glucosamine 6-phosphate (route II): step 2/2. The protein operates within nucleotide-sugar biosynthesis; UDP-N-acetyl-alpha-D-glucosamine biosynthesis; UDP-N-acetyl-alpha-D-glucosamine from N-acetyl-alpha-D-glucosamine 1-phosphate: step 1/1. It participates in bacterial outer membrane biogenesis; LPS lipid A biosynthesis. Its function is as follows. Catalyzes the last two sequential reactions in the de novo biosynthetic pathway for UDP-N-acetylglucosamine (UDP-GlcNAc). The C-terminal domain catalyzes the transfer of acetyl group from acetyl coenzyme A to glucosamine-1-phosphate (GlcN-1-P) to produce N-acetylglucosamine-1-phosphate (GlcNAc-1-P), which is converted into UDP-GlcNAc by the transfer of uridine 5-monophosphate (from uridine 5-triphosphate), a reaction catalyzed by the N-terminal domain. The protein is Bifunctional protein GlmU of Streptococcus uberis (strain ATCC BAA-854 / 0140J).